A 155-amino-acid chain; its full sequence is Ribosome maturation factor RimP (155 aa).

The protein belongs to the RimP family.

The protein localises to the cytoplasm. Its function is as follows. Required for maturation of 30S ribosomal subunits. This is Ribosome maturation factor RimP from Bacteroides thetaiotaomicron (strain ATCC 29148 / DSM 2079 / JCM 5827 / CCUG 10774 / NCTC 10582 / VPI-5482 / E50).